Consider the following 421-residue polypeptide: MKFFKITTLIISLIVLTSCQGPGVNGDEDRKQVTILGVMIGEQQEKIEQALAPFTEATGIEVVYEGVDTFATTLPIRVDSGRAPDLAMFPQPGLMADFAREGKLVPLGEILTPEEMTEAYDQAWLDLAAVDGTVYGVWYRASVKSLVWFNPQEFAANGYEVPGTWEEMMALSQRLIDKGKTPWCLGIESGNATGWVGTDWVEDIMLRTASPATYDQWVAHDIPFNDRRVENALDIFGEITQNEKMIYGGKVGALSTPFGDSILGLFTDPPHCYLHRQGNFIAAFLPADVDDDQVDIFPLPPIEEEYGLPILVAGDIFAMFNDTPEARQLMAYLASSRPHEVAATLGAYISPHKNIDLNLYPDRLTRKQAEILNKAEVIRFDASDMMPGAVGTGTFWSGMVDYIGGADGTQVLNTIERSWPR.

The signal sequence occupies residues 1 to 18; it reads MKFFKITTLIISLIVLTS. A lipid anchor (N-palmitoyl cysteine) is attached at Cys-19. Cys-19 carries the S-diacylglycerol cysteine lipid modification.

This sequence belongs to the bacterial solute-binding protein 1 family. As to quaternary structure, the complex is composed of two ATP-binding proteins (GgtA), two transmembrane proteins (GgtC and GgtD) and a solute-binding protein (GgtB).

Its subcellular location is the cell membrane. Functionally, part of the ABC transporter complex GgtABCD involved in the uptake of the osmoprotective compounds glucosylglycerol (GG), sucrose and trehalose. Binds glucosylglycerol and exhibits a somewhat lower affinity towards sucrose and a substantially lower affinity towards trehalose. The protein is Osmoprotective compounds-binding protein GgtB of Synechocystis sp. (strain ATCC 27184 / PCC 6803 / Kazusa).